The sequence spans 706 residues: Methionine--tRNA ligase (706 aa).

The short motif at 13–23 is the 'HIGH' region element; it reads PYANGSIHLGH. Zn(2+)-binding residues include cysteine 144, cysteine 147, cysteine 157, and cysteine 160. A 'KMSKS' region motif is present at residues 336-340; it reads KMSKS. Lysine 339 serves as a coordination point for ATP. Residues 570–593 form a disordered region; that stretch reads QQTMNTETESHSPQRHGQAQQHPV. Positions 604 to 706 constitute a tRNA-binding domain; the sequence is DFVKIDLRIA…SGAQPGMRVK (103 aa).

The protein belongs to the class-I aminoacyl-tRNA synthetase family. MetG type 1 subfamily. Homodimer. The cofactor is Zn(2+).

The protein resides in the cytoplasm. It carries out the reaction tRNA(Met) + L-methionine + ATP = L-methionyl-tRNA(Met) + AMP + diphosphate. Is required not only for elongation of protein synthesis but also for the initiation of all mRNA translation through initiator tRNA(fMet) aminoacylation. The protein is Methionine--tRNA ligase of Nitrosomonas europaea (strain ATCC 19718 / CIP 103999 / KCTC 2705 / NBRC 14298).